A 179-amino-acid chain; its full sequence is DELTA-actitoxin-Afr1c (179 aa).

Positions 1–29 (SAEVAGAIIDGASLTFDVLQTVLKALGDV) are N-terminal alpha-helix that contributes to the pore. Residues 11–30 (GASLTFDVLQTVLKALGDVS) form an N-terminal region region. R31 is an an N-(acyl)-sphingosylphosphocholine binding site. The N-acetyl-D-glucosamine 6-sulfate site is built by Y51 and R53. Positions 53, 54, 79, 85, 113, 114, 116, 133, 137, 138, 144, and 168 each coordinate an N-(acyl)-sphingosylphosphocholine. Positions 105-120 (SIPFDYNLYSNWWNVK) are trp-rich region, which is important for the binding to lipid membrane. Y138 is a binding site for N-acetyl-D-glucosamine 6-sulfate. The Cell attachment site, crucial for protein stability motif lies at 144-146 (RGD).

Belongs to the actinoporin family. Sea anemone subfamily. In terms of assembly, octamer or nonamer in membranes. Monomer in the soluble state.

The protein resides in the secreted. The protein localises to the nematocyst. It localises to the target cell membrane. Its function is as follows. Pore-forming toxin (PFT) that consists of a crown-shaped octamer or nonamer that forms cation-selective hydrophilic pores of about 1.5 nm (inside) and 13 nm (outside) and causes cytolysis. It causes cardiac stimulation. Also causes hemolysis (HC(50)=0.3 nM). Interestingly, the Phe-16 is crucial for hemolysis. Pore formation is a multi-step process that involves specific recognition of membrane sphingomyelin (but neither cholesterol nor phosphatidylcholine) using aromatic rich region and adjacent phosphocholine (POC) binding site, firm binding to the membrane (mainly driven by hydrophobic interactions) accompanied by the transfer of the N-terminal region to the lipid-water interface and finally pore formation after oligomerization of monomers. It is probable that a dimeric form is an assembly intermediate before the complete oligomerization. The formation of stable pores occurs only in vesicles composed of DOPC/SM (there is no oligomerization when the PFT is treated with vesicles of DOPC or SM alone). The transmembrane pore displays 8 lateral perforations, one at each subunit-subunit interface, partially occupied by the acyl-chain region of a bridging lipid. Each pore contains 24 lipid molecules, firmly bound to each subunit, that is, 3 lipids (L1, L2, L3, L4 and/or L5) are associated to each subunit. Lipid L1 bridges 2 subunits, whereas lipids L2 and L3 bind to sites at single subunit. This is DELTA-actitoxin-Afr1c from Actinia fragacea (Strawberry anemone).